A 264-amino-acid polypeptide reads, in one-letter code: Carbonic anhydrase 7 (264 aa).

In terms of domain architecture, Alpha-carbonic anhydrase spans 5–262 (HCWGYGQDDG…LKGRVVKASF (258 aa)). Residue His66 is the Proton donor/acceptor of the active site. Zn(2+)-binding residues include His96, His98, and His121. A substrate-binding site is contributed by 201–202 (TT).

This sequence belongs to the alpha-carbonic anhydrase family. Zn(2+) serves as cofactor.

Its subcellular location is the cytoplasm. It catalyses the reaction hydrogencarbonate + H(+) = CO2 + H2O. Its function is as follows. Reversible hydration of carbon dioxide. The sequence is that of Carbonic anhydrase 7 (Ca7) from Mus musculus (Mouse).